The following is a 244-amino-acid chain: Octanoyltransferase (244 aa).

The tract at residues 1-21 is disordered; it reads MDKKLHSVSPESGPNSNLDLT. Polar residues predominate over residues 9-21; it reads SPESGPNSNLDLT. In terms of domain architecture, BPL/LPL catalytic spans 59–244; the sequence is PFSPQAVWLL…LNWEKINQSL (186 aa). Substrate-binding positions include 101–108, 168–170, and 181–183; these read RGGEVTHH, SIG, and GFS. The active-site Acyl-thioester intermediate is C199.

This sequence belongs to the LipB family.

It is found in the cytoplasm. The catalysed reaction is octanoyl-[ACP] + L-lysyl-[protein] = N(6)-octanoyl-L-lysyl-[protein] + holo-[ACP] + H(+). It participates in protein modification; protein lipoylation via endogenous pathway; protein N(6)-(lipoyl)lysine from octanoyl-[acyl-carrier-protein]: step 1/2. Catalyzes the transfer of endogenously produced octanoic acid from octanoyl-acyl-carrier-protein onto the lipoyl domains of lipoate-dependent enzymes. Lipoyl-ACP can also act as a substrate although octanoyl-ACP is likely to be the physiological substrate. The polypeptide is Octanoyltransferase (Prochlorococcus marinus (strain NATL1A)).